Consider the following 488-residue polypeptide: GTPase Der (488 aa).

Positions 3-166 constitute an EngA-type G 1 domain; it reads PVVALVGRPN…YALAPYAEAL (164 aa). GTP-binding positions include 9 to 16, 56 to 60, and 118 to 121; these read GRPNVGKS, DTGGI, and NKVD. Residues 168 to 192 are disordered; that stretch reads LNRDGDDEEEKEEREYTEEEAEAEQ. Over residues 172–190 the composition is skewed to acidic residues; the sequence is GDDEEEKEEREYTEEEAEA. The 174-residue stretch at 200-373 folds into the EngA-type G 2 domain; the sequence is IKLAVIGKPN…SVQEAYESAT (174 aa). Residues 206–213, 253–257, and 318–321 each bind GTP; these read GKPNVGKS, DTAGV, and NKWD. The KH-like domain occupies 374–458; that stretch reads RRVSTSMLTR…PIQVRFQDGD (85 aa).

The protein belongs to the TRAFAC class TrmE-Era-EngA-EngB-Septin-like GTPase superfamily. EngA (Der) GTPase family. In terms of assembly, associates with the 50S ribosomal subunit.

In terms of biological role, GTPase that plays an essential role in the late steps of ribosome biogenesis. This chain is GTPase Der, found in Shewanella woodyi (strain ATCC 51908 / MS32).